The following is a 519-amino-acid chain: Alkaline phosphatase, tissue-nonspecific isozyme (519 aa).

The first 16 residues, 1-16, serve as a signal peptide directing secretion; that stretch reads MKAFLLTLLAQLCSAS. Residue D59 participates in Mg(2+) binding. Zn(2+) is bound by residues D59 and S109. The active-site Phosphoserine intermediate is S109. C138 and C200 are oxidised to a cystine. The N-linked (GlcNAc...) asparagine glycan is linked to N139. Residue T172 participates in Mg(2+) binding. An N-linked (GlcNAc...) asparagine glycan is attached at N229. E234 contributes to the Ca(2+) binding site. A glycan (N-linked (GlcNAc...) asparagine) is linked at N278. Ca(2+) contacts are provided by F289 and E290. The N-linked (GlcNAc...) asparagine glycan is linked to N302. D305 provides a ligand contact to Ca(2+). Position 331 (E331) interacts with Mg(2+). Zn(2+) is bound by residues D336, H340, D377, and H378. N429 is a glycosylation site (N-linked (GlcNAc...) asparagine). H453 is a Zn(2+) binding site. A disulfide bridge links C488 with C496. A lipid anchor (GPI-anchor amidated serine) is attached at S498. Residues 499-519 constitute a propeptide, removed in mature form; sequence AARPAATATLLPVLLLLLLLC.

It belongs to the alkaline phosphatase family. As to quaternary structure, homodimer. The cofactor is Mg(2+). It depends on Zn(2+) as a cofactor. Ca(2+) serves as cofactor.

The protein localises to the cell membrane. It is found in the extracellular vesicle membrane. The catalysed reaction is a phosphate monoester + H2O = an alcohol + phosphate. It carries out the reaction diphosphate + H2O = 2 phosphate + H(+). The enzyme catalyses pyridoxal 5'-phosphate + H2O = pyridoxal + phosphate. It catalyses the reaction phosphoethanolamine + H2O = ethanolamine + phosphate. The catalysed reaction is ATP + H2O = ADP + phosphate + H(+). It carries out the reaction ADP + H2O = AMP + phosphate + H(+). The enzyme catalyses AMP + H2O = adenosine + phosphate. Alkaline phosphatase that metabolizes various phosphate compounds and plays a key role in skeletal mineralization and adaptive thermogenesis. Has broad substrate specificity and can hydrolyze a considerable variety of compounds: however, only a few substrates, such as diphosphate (inorganic pyrophosphate; PPi) and pyridoxal 5'-phosphate (PLP) are natural substrates. Plays an essential role in skeletal and dental mineralization via its ability to hydrolyze extracellular diphosphate, a potent mineralization inhibitor, to phosphate: it thereby promotes hydroxyapatite crystal formation and increases inorganic phosphate concentration. Catalyzes dephosphorylation of PLP to pyridoxal (PL), the transportable form of vitamin B6, in order to provide a sufficient amount of PLP in the brain, an essential cofactor for enzymes catalyzing the synthesis of diverse neurotransmitters. Additionally, also able to mediate ATP degradation in a stepwise manner to adenosine, thereby regulating the availability of ligands for purinergic receptors. Involved in the establishment and growth of feather germs. This Gallus gallus (Chicken) protein is Alkaline phosphatase, tissue-nonspecific isozyme (ALPL).